A 582-amino-acid chain; its full sequence is Heterogeneous nuclear ribonucleoprotein C homolog (582 aa).

Residues 1–21 (MSEALETGDPSPPPPIVSENG) form a disordered region. 3 C2H2-type zinc fingers span residues 102–125 (YYCC…RGYH), 130–154 (SSCD…RRTH), and 213–235 (YACL…VEMH).

The protein localises to the nucleus. In Caenorhabditis elegans, this protein is Heterogeneous nuclear ribonucleoprotein C homolog.